The primary structure comprises 404 residues: 6-hydroxytryptophan 2,3-dioxygenase fscD (404 aa).

Residue H341 participates in heme b binding.

The protein belongs to the indoleamine 2,3-dioxygenase family. It depends on heme as a cofactor.

It functions in the pathway secondary metabolite biosynthesis. 6-hydroxytryptophan 2,3-dioxygenase; part of the fragmented gene cluster that mediates the biosynthesis of fusarochromene, a tryptophan-derived metabolite closely related to a group of mycotoxins including fusarochromanone. Within the pathway, fscD is responsible of the cleavage of the pyrrole ring of 6-hydroxytryptophan. The first step of the pathway is the epimerization of L-tryptophan to D-tryptophan in the presence of the NRPS-like tryptophan epimerase fscC. D-tryptophan is subsequently hydroxylated by the tryptophan 6-hydroxylase fscE to yield 6-hydroxytryptophan. The pyrrole ring undergoes cleavaged by the tryptophan 2,3-dioxygenase fscD and is finally converted to 4-hydroxykyrunenine by the hydrolase fscH. The NRPS-like oxidoreductase fscA reduces the carboxyl group to primary alcohol and the DMATS-type prenyltransferase fscG performs prenylation, followed by the formation of a chromene ring catalyzed by the oxidoreductase fscI, which leads to desacetylfusarochromene. Epoxidation by fscF and rearrangement reactions of chromene double bonds convert compound desacetylfusarochromene to fusarochromanones. Although specific acetyltransferases were not found near the fsc gene cluster, several predicted enzymes containing the N-acetyltransferase superfamily domain are present in the genome of F.equiseti. These predicted enzymes may have the potential to convert desacetylfusarochromene to fusarochromene. This chain is 6-hydroxytryptophan 2,3-dioxygenase fscD, found in Fusarium equiseti (Fusarium scirpi).